We begin with the raw amino-acid sequence, 245 residues long: Orotidine 5'-phosphate decarboxylase (245 aa).

Residues aspartate 22, lysine 44, aspartate 71–threonine 80, threonine 131, arginine 192, glutamine 201, glycine 221, and arginine 222 contribute to the substrate site. Lysine 73 serves as the catalytic Proton donor.

This sequence belongs to the OMP decarboxylase family. Type 1 subfamily. Homodimer.

It carries out the reaction orotidine 5'-phosphate + H(+) = UMP + CO2. The protein operates within pyrimidine metabolism; UMP biosynthesis via de novo pathway; UMP from orotate: step 2/2. Functionally, catalyzes the decarboxylation of orotidine 5'-monophosphate (OMP) to uridine 5'-monophosphate (UMP). In Escherichia coli O45:K1 (strain S88 / ExPEC), this protein is Orotidine 5'-phosphate decarboxylase.